Reading from the N-terminus, the 589-residue chain is MTRLSSSFFFTLREAPAEAVAVSHKLLLRAGFIRPLAGTAGLYAYGPLMQRVLQKVGRIVREEMDATGAQEALFCQLQPAEIWKESGRWTVYTQDGTMFTLKDGQGEQAREYGLGPTHEEAVCDFVRASLNSYKQLPFHLYQVQTKFRNEKRPRFGLMRGREFIMKDGYSFHATPESLDETYRAMYRAYTNMFRRCGLDFRAVEADSGAIGGSGSHEFMALCDIGEDTILYCDAAGYAANVEKAVSLVSDPEAIGPGSYAVKSTPGIRTVEQQAAMLGVPISRIVKNIVYVALYAEADPRPVLVSIRGDRHINETKLKNRLDCLDVRLADEAELAAWVEVKPGFVGPDAPIAGVIRLADRSVDGLTDFSTGCNQDDVQCVWANWGENGLVLPEVADLDTAQAGDHCHLAPEATLQSARGVELGHIFKLGTKYSRPMQVLFADEAGELQPALMGCYGVGVSRLPAAVVEQSHDNDGILWPIAIAPYQVVLVPANVAVEAQRQAAEELYRSLTAAGIDTLLDDRPERAGVKFKDADLIGIPLRVTLGRDLEAGLVEIKVRGGGAAEKVPLAEALAQIKGLIERLNSAQHSR.

This sequence belongs to the class-II aminoacyl-tRNA synthetase family. ProS type 1 subfamily. Homodimer.

The protein resides in the cytoplasm. The catalysed reaction is tRNA(Pro) + L-proline + ATP = L-prolyl-tRNA(Pro) + AMP + diphosphate. Its function is as follows. Catalyzes the attachment of proline to tRNA(Pro) in a two-step reaction: proline is first activated by ATP to form Pro-AMP and then transferred to the acceptor end of tRNA(Pro). As ProRS can inadvertently accommodate and process non-cognate amino acids such as alanine and cysteine, to avoid such errors it has two additional distinct editing activities against alanine. One activity is designated as 'pretransfer' editing and involves the tRNA(Pro)-independent hydrolysis of activated Ala-AMP. The other activity is designated 'posttransfer' editing and involves deacylation of mischarged Ala-tRNA(Pro). The misacylated Cys-tRNA(Pro) is not edited by ProRS. The protein is Proline--tRNA ligase of Gloeobacter violaceus (strain ATCC 29082 / PCC 7421).